Reading from the N-terminus, the 603-residue chain is NADH-ubiquinone oxidoreductase chain 5 (603 aa).

Helical transmembrane passes span 4 to 24, 36 to 56, 87 to 107, 122 to 142, 171 to 191, 211 to 233, 241 to 261, 272 to 292, 301 to 320, 325 to 347, 370 to 390, 406 to 422, 488 to 508, and 583 to 603; these read YTSI…ATLV, VKTT…LYIF, MMFI…SLWY, LIFL…QLFI, AVLY…WFLL, LPLM…HPWL, TPVS…FLLI, LTQN…AMCA, IVAF…IGIN, AFLH…GSII, STSL…TGFY, AWAL…TSAY, LLAL…TLMT, and MIKL…LLMV.

This sequence belongs to the complex I subunit 5 family. Core subunit of respiratory chain NADH dehydrogenase (Complex I) which is composed of 45 different subunits.

Its subcellular location is the mitochondrion inner membrane. It catalyses the reaction a ubiquinone + NADH + 5 H(+)(in) = a ubiquinol + NAD(+) + 4 H(+)(out). In terms of biological role, core subunit of the mitochondrial membrane respiratory chain NADH dehydrogenase (Complex I) which catalyzes electron transfer from NADH through the respiratory chain, using ubiquinone as an electron acceptor. Essential for the catalytic activity and assembly of complex I. This Papio hamadryas (Hamadryas baboon) protein is NADH-ubiquinone oxidoreductase chain 5 (MT-ND5).